A 266-amino-acid polypeptide reads, in one-letter code: Glutamate racemase (266 aa).

Substrate is bound by residues 9–10 (DS) and 41–42 (YG). Cysteine 72 functions as the Proton donor/acceptor in the catalytic mechanism. 73 to 74 (NT) provides a ligand contact to substrate. Cysteine 184 serves as the catalytic Proton donor/acceptor. 185-186 (TH) serves as a coordination point for substrate.

This sequence belongs to the aspartate/glutamate racemases family.

The catalysed reaction is L-glutamate = D-glutamate. The protein operates within cell wall biogenesis; peptidoglycan biosynthesis. Functionally, provides the (R)-glutamate required for cell wall biosynthesis. The chain is Glutamate racemase from Staphylococcus haemolyticus (strain JCSC1435).